The following is a 696-amino-acid chain: Interleukin-1 receptor accessory protein-like 1 (696 aa).

The signal sequence occupies residues Met-1–Ser-18. One can recognise an Ig-like 1 domain in the interval Leu-19–Thr-134. Residues Leu-19 to Thr-357 lie on the Extracellular side of the membrane. Disulfide bonds link Cys-31-Cys-126 and Cys-53-Cys-118. N-linked (GlcNAc...) asparagine glycans are attached at residues Asn-63, Asn-122, and Asn-138. 2 disulfide bridges follow: Cys-143–Cys-185 and Cys-164–Cys-216. Ig-like domains are found at residues Cys-143–Thr-232 and Pro-242–His-350. Residues Asn-213, Asn-264, and Asn-331 are each glycosylated (N-linked (GlcNAc...) asparagine). A disulfide bond links Cys-267 and Cys-334. Residues Val-358–Tyr-378 form a helical membrane-spanning segment. Residues Lys-379–Trp-696 are Cytoplasmic-facing. The TIR domain maps to Lys-403–Met-559. Glu-491 is an active-site residue. The interaction with NCS1 stretch occupies residues Ser-549 to Gly-644. The disordered stretch occupies residues Gly-659 to Ala-680. Basic and acidic residues predominate over residues Ser-666–His-676.

Belongs to the interleukin-1 receptor family. Homodimer. Interacts (calcium-independent) with NCS1/FREQ. Interacts (via the first immunoglobilin domain) with PTPRD (via the second immunoglobilin domain); this interaction is PTPRD-splicing-dependent and induces pre- and post-synaptic differentiation of neurons and is required for IL1RAPL1-mediated synapse formation.

Its subcellular location is the cell membrane. The protein resides in the cytoplasm. It is found in the cell projection. It localises to the axon. The protein localises to the dendrite. The enzyme catalyses NAD(+) + H2O = ADP-D-ribose + nicotinamide + H(+). Its function is as follows. May regulate secretion and presynaptic differentiation through inhibition of the activity of N-type voltage-gated calcium channel. May activate the MAP kinase JNK. Plays a role in neurite outgrowth. During dendritic spine formation can bidirectionally induce pre- and post-synaptic differentiation of neurons by trans-synaptically binding to PTPRD. This Pongo pygmaeus (Bornean orangutan) protein is Interleukin-1 receptor accessory protein-like 1 (IL1RAPL1).